The sequence spans 156 residues: Small ribosomal subunit protein uS7 (156 aa).

Belongs to the universal ribosomal protein uS7 family. As to quaternary structure, part of the 30S ribosomal subunit. Contacts proteins S9 and S11.

In terms of biological role, one of the primary rRNA binding proteins, it binds directly to 16S rRNA where it nucleates assembly of the head domain of the 30S subunit. Is located at the subunit interface close to the decoding center, probably blocks exit of the E-site tRNA. This is Small ribosomal subunit protein uS7 from Erythrobacter litoralis (strain HTCC2594).